Reading from the N-terminus, the 425-residue chain is Type I restriction enzyme MjaVII specificity subunit (425 aa).

The segment at 9-168 (KKTEIGEIPE…KSFKIPLPPL (160 aa)) is target recognition domain 1. A central conserved region (CCR) region spans residues 169-208 (EEQKQIAKILTKIDEGIEIIEKSINKLERIKKGLMHKLLT). A coiled-coil region spans residues 169–208 (EEQKQIAKILTKIDEGIEIIEKSINKLERIKKGLMHKLLT). A target recognition domain 2 region spans residues 209–368 (KGIGHSRFKK…TFKELSKSML (160 aa)). Positions 369-418 (ENFKIPLPPLEEQKQIAKILSSVDKSIELKKQKKEKLQRMKKKIMELLLT) form a coiled coil. The segment at 369–418 (ENFKIPLPPLEEQKQIAKILSSVDKSIELKKQKKEKLQRMKKKIMELLLT) is distal conserved region (DCR).

It belongs to the type-I restriction system S methylase family. In terms of assembly, the type I restriction/modification system is composed of three polypeptides R, M and S.

The specificity (S) subunit of a type I restriction enzyme; this subunit dictates DNA sequence specificity. The M and S subunits together form a methyltransferase (MTase) that methylates A-3 on the top and bottom strands of the sequence 5'-CAAN(7)TGG-3'. In the presence of the R subunit the complex can also act as an endonuclease, binding to the same target sequence but cutting the DNA some distance from this site. Whether the DNA is cut or modified depends on the methylation state of the target sequence. When the target site is unmodified, the DNA is cut. When the target site is hemimethylated, the complex acts as a maintenance MTase modifying the DNA so that both strands become methylated. After locating a non-methylated recognition site, the enzyme complex serves as a molecular motor that translocates DNA in an ATP-dependent manner until a collision occurs that triggers cleavage. This chain is Type I restriction enzyme MjaVII specificity subunit, found in Methanocaldococcus jannaschii (strain ATCC 43067 / DSM 2661 / JAL-1 / JCM 10045 / NBRC 100440) (Methanococcus jannaschii).